An 81-amino-acid chain; its full sequence is Small ribosomal subunit protein bS16 (81 aa).

This sequence belongs to the bacterial ribosomal protein bS16 family.

The polypeptide is Small ribosomal subunit protein bS16 (Treponema denticola (strain ATCC 35405 / DSM 14222 / CIP 103919 / JCM 8153 / KCTC 15104)).